Consider the following 313-residue polypeptide: Methionyl-tRNA formyltransferase (313 aa).

113–116 (SLLP) is a (6S)-5,6,7,8-tetrahydrofolate binding site.

This sequence belongs to the Fmt family.

The enzyme catalyses L-methionyl-tRNA(fMet) + (6R)-10-formyltetrahydrofolate = N-formyl-L-methionyl-tRNA(fMet) + (6S)-5,6,7,8-tetrahydrofolate + H(+). Attaches a formyl group to the free amino group of methionyl-tRNA(fMet). The formyl group appears to play a dual role in the initiator identity of N-formylmethionyl-tRNA by promoting its recognition by IF2 and preventing the misappropriation of this tRNA by the elongation apparatus. The sequence is that of Methionyl-tRNA formyltransferase from Francisella tularensis subsp. mediasiatica (strain FSC147).